A 1363-amino-acid chain; its full sequence is Xanthine dehydrogenase (1363 aa).

Residues 35–121 form the 2Fe-2S ferredoxin-type domain; that stretch reads DTIRFYLNGT…GKHVITVEGI (87 aa). Cysteine 73, cysteine 78, cysteine 81, cysteine 103, cysteine 142, cysteine 145, cysteine 177, and cysteine 179 together coordinate [2Fe-2S] cluster. Residues 266 to 450 enclose the FAD-binding PCMH-type domain; that stretch reads FGNKRKKWYR…SSLRIPTASE (185 aa). Residues 294–301, phenylalanine 374, 384–388, aspartate 397, and lysine 459 each bind FAD; these read LIGGSTET and SPAGN. Mo-molybdopterin is bound by residues glutamine 798 and phenylalanine 829. Glutamate 833 and arginine 911 together coordinate substrate. Mo-molybdopterin is bound at residue arginine 943. Substrate contacts are provided by phenylalanine 945 and threonine 1041. Mo-molybdopterin is bound at residue alanine 1110. Glutamate 1295 functions as the Proton acceptor in the catalytic mechanism.

It belongs to the xanthine dehydrogenase family. FAD serves as cofactor. Mo-molybdopterin is required as a cofactor. The cofactor is [2Fe-2S] cluster.

Its subcellular location is the peroxisome. It carries out the reaction xanthine + NAD(+) + H2O = urate + NADH + H(+). The enzyme catalyses hypoxanthine + NAD(+) + H2O = xanthine + NADH + H(+). Key enzyme in purine degradation. Catalyzes the oxidation of hypoxanthine to xanthine. Catalyzes the oxidation of xanthine to uric acid. In Emericella nidulans (strain FGSC A4 / ATCC 38163 / CBS 112.46 / NRRL 194 / M139) (Aspergillus nidulans), this protein is Xanthine dehydrogenase (hxA).